Here is a 970-residue protein sequence, read N- to C-terminus: Cullin-4B (970 aa).

Basic and acidic residues predominate over residues 1 to 14 (MSRSTRSKERREND). 2 disordered regions span residues 1–157 (MSRS…SFCL) and 189–211 (AEES…QQQQ). Position 15 is a phosphothreonine (Thr15). Residue Ser17 is modified to Phosphoserine. Pro residues predominate over residues 36-57 (PPRPPYPPLLPPVFPPPTPPPQ). The span at 78–98 (SGFSSPNPSAASAAAQEVRSA) shows a compositional bias: low complexity. Residues 99–109 (TDGNTSTTPPT) are compositionally biased toward polar residues. At Thr106 the chain carries Phosphothreonine. Ser110 is modified (phosphoserine). The Nuclear localization signal motif lies at 112–115 (KKRK). Low complexity predominate over residues 117 to 126 (NSSSSSSNSS). Over residues 146 to 155 (DSASPSTSSF) the composition is skewed to polar residues. A phosphoserine mark is found at Ser154 and Ser200. Residues 192-211 (SSSSSSSSSPTAATSQQQQQ) show a composition bias toward low complexity. Thr202 is subject to Phosphothreonine. Lys247 participates in a covalent cross-link: Glycyl lysine isopeptide (Lys-Gly) (interchain with G-Cter in ubiquitin). Phosphoserine is present on Ser250. In terms of domain architecture, Cullin neddylation spans 902 to 962 (DRQYQIDAAI…RDYMERDKEN (61 aa)). Residue Lys916 forms a Glycyl lysine isopeptide (Lys-Gly) (interchain with G-Cter in NEDD8) linkage.

Belongs to the cullin family. In terms of assembly, component of multiple DCX (DDB1-CUL4-X-box) E3 ubiquitin-protein ligase complexes that seem to be formed of DDB1, CUL4A or CUL4B, RBX1 and a variable substrate recognition component which seems to belong to a protein family described as DCAF (Ddb1- and Cul4-associated factor) or CDW (CUL4-DDB1-associated WD40-repeat) proteins. Component of the DCX(DTL) complex with the putative substrate recognition component DTL. Component of the DCX(DDB2) complex with the putative substrate recognition component DDB2. Component of DCX complexes part of the DesCEND (destruction via C-end degrons) pathway, which contain either TRPC4AP or DCAF12 as substrate-recognition component. Component of the DCX(AMBRA1) complex with the substrate recognition component AMBRA1. Part of a complex with RBX1 and TIP120A/CAND1. Component of the DCX(WDR77) complex, composed of Cul4b, Ddb1, Wdr77 and Rbx1. Interacts with RBX1, GRWD1, MLST8, SMU1, TLE2, TLE3, DCAF1, DDA1, DCAF6, DCAF17, DDB2, DCAF8, TIP120A/CAND1 and TMEM113. Interacts with cyclin E (CCNE1 or CCNE2) and with importins alpha-1 (KPNA2), alpha-3 (KPNA4), alpha-5 (KPNA1) and beta-1 (KPNB1). May interact with WDR26, WDR51B, SNRNP40, WDR61, WDR76 and WDR5. Interacts (unneddylated form) with DCUN1D1, DCUN1D2, DCUN1D3, DCUN1D4 and DCUN1D5; these interactions promote the cullin neddylation. In terms of processing, neddylated. Deneddylated via its interaction with the COP9 signalosome (CSN) complex. In terms of tissue distribution, expressed in oocytes (at protein level).

The protein resides in the cytoplasm. Its subcellular location is the nucleus. Its pathway is protein modification; protein ubiquitination. In terms of biological role, core component of multiple cullin-RING-based E3 ubiquitin-protein ligase complexes which mediate the ubiquitination and subsequent proteasomal degradation of target proteins. The functional specificity of the E3 ubiquitin-protein ligase complex depends on the variable substrate recognition subunit. CUL4B may act within the complex as a scaffold protein, contributing to catalysis through positioning of the substrate and the ubiquitin-conjugating enzyme. Plays a role as part of the E3 ubiquitin-protein ligase complex in polyubiquitination of CDT1, histone H2A, histone H3 and histone H4 in response to radiation-induced DNA damage. Targeted to UV damaged chromatin by DDB2 and may be important for DNA repair and DNA replication. A number of DCX complexes (containing either TRPC4AP or DCAF12 as substrate-recognition component) are part of the DesCEND (destruction via C-end degrons) pathway, which recognizes a C-degron located at the extreme C terminus of target proteins, leading to their ubiquitination and degradation. The DCX(AMBRA1) complex is a master regulator of the transition from G1 to S cell phase by mediating ubiquitination of phosphorylated cyclin-D (CCND1, CCND2 and CCND3). The DCX(AMBRA1) complex also acts as a regulator of Cul5-RING (CRL5) E3 ubiquitin-protein ligase complexes by mediating ubiquitination and degradation of Elongin-C (ELOC) component of CRL5 complexes. Required for ubiquitination of cyclin E (CCNE1 or CCNE2), and consequently, normal G1 cell cycle progression. Component of the DCX(WDR77) complex, which mediates ubiquitination and degradation of Irgm1 in intestinal cells. Regulates the mammalian target-of-rapamycin (mTOR) pathway involved in control of cell growth, size and metabolism. Specific CUL4B regulation of the mTORC1-mediated pathway is dependent upon 26S proteasome function and requires interaction between CUL4B and MLST8. With CUL4A, contributes to ribosome biogenesis. This Mus musculus (Mouse) protein is Cullin-4B.